The sequence spans 142 residues: Matrix protein (142 aa).

GMP is bound by residues 64–66 (DVE) and alanine 117.

In terms of assembly, homooligomer. Homotetramer. Interacts with phosphoprotein P. Binds to ssRNA. Post-translationally, not glycosylated.

The protein resides in the virion. It localises to the host cytoplasm. Its subcellular location is the host cell membrane. Plays a crucial role in virion assembly and budding. In Bos taurus (Bovine), this protein is Matrix protein (M).